The following is a 443-amino-acid chain: Exodeoxyribonuclease 7 large subunit (443 aa).

This sequence belongs to the XseA family. As to quaternary structure, heterooligomer composed of large and small subunits.

Its subcellular location is the cytoplasm. It catalyses the reaction Exonucleolytic cleavage in either 5'- to 3'- or 3'- to 5'-direction to yield nucleoside 5'-phosphates.. Its function is as follows. Bidirectionally degrades single-stranded DNA into large acid-insoluble oligonucleotides, which are then degraded further into small acid-soluble oligonucleotides. In Legionella pneumophila (strain Paris), this protein is Exodeoxyribonuclease 7 large subunit.